Here is a 566-residue protein sequence, read N- to C-terminus: Arginine--tRNA ligase (566 aa).

A 'HIGH' region motif is present at residues 120 to 130 (PNIAKPFHVGH).

Belongs to the class-I aminoacyl-tRNA synthetase family. In terms of assembly, monomer.

The protein resides in the cytoplasm. The catalysed reaction is tRNA(Arg) + L-arginine + ATP = L-arginyl-tRNA(Arg) + AMP + diphosphate. The chain is Arginine--tRNA ligase from Clostridium kluyveri (strain NBRC 12016).